The following is a 595-amino-acid chain: CDPK-related kinase 3 (595 aa).

Residues 1–131 are disordered; it reads MGQCYGKVNQ…GTEPEQSLDK (131 aa). A lipid anchor (N-myristoyl glycine) is attached at Gly-2. Residues 20-37 show a composition bias toward polar residues; that stretch reads NTTTYVVSGDGNQIQPLT. Over residues 111–124 the composition is skewed to basic and acidic residues; the sequence is KPKEGPIPEERGTE. The Protein kinase domain maps to 143–405; it reads YELGKEVGRG…AVQALTHPWL (263 aa). Residues 149–157 and Lys-175 each bind ATP; that span reads VGRGHFGHT. Asp-271 acts as the Proton acceptor in catalysis. The residue at position 311 (Ser-311) is a Phosphoserine. Residue Ser-353 is modified to Phosphoserine; by CPK1 and CPK34. The autoinhibitory domain stretch occupies residues 409–439; it reads SRVIPLDILIYKLVKAYLHATPLRRAALKAL. Residues 428–448 are calmodulin binding (CaMBD); sequence ATPLRRAALKALAKALTENEL. 4 consecutive EF-hand domains span residues 446 to 482, 483 to 518, 519 to 558, and 559 to 588; these read NELV…ATDA, MRES…IHQL, EAVD…GASA, and YGHL…VTLR. Asn-461, Asp-463, Ser-465, Lys-502, Glu-507, Asn-540, Glu-547, Ser-568, Asp-570, and Lys-572 together coordinate Ca(2+). Ser-574 is subject to Phosphoserine.

Belongs to the protein kinase superfamily. Ser/Thr protein kinase family. CDPK subfamily. As to quaternary structure, binds calmodulin (CaM) in a calcium-dependent manner. Interacts with GLN1-1. Autophosphorylated. In terms of tissue distribution, ubiquitously expressed with higher levels in siliques and roots, especially at the root cap. Particularly present in vascular bundles of stems and leaves.

Its subcellular location is the cytoplasm. It localises to the membrane. It carries out the reaction L-seryl-[protein] + ATP = O-phospho-L-seryl-[protein] + ADP + H(+). The catalysed reaction is L-threonyl-[protein] + ATP = O-phospho-L-threonyl-[protein] + ADP + H(+). Its activity is regulated as follows. Not activated by calcium. Autophosphorylation may play an important role in the regulation of the kinase activity. Stimulated by magnesium ions (optimum at 10-15 mM) and manganese ions. Functionally, may play a role in signal transduction pathways that involve calcium as a second messenger. Serine/threonine kinase that phosphorylates histone H3 an GLN1-1. The protein is CDPK-related kinase 3 (CRK3) of Arabidopsis thaliana (Mouse-ear cress).